Here is a 626-residue protein sequence, read N- to C-terminus: Elongation factor 4 (626 aa).

A tr-type G domain is found at 14 to 195; the sequence is SLIRNFCIIA…RIVVDVPAPT (182 aa). GTP is bound by residues 26–31 and 142–145; these read DHGKST and NKID. The disordered stretch occupies residues 603-626; it reads LSTGEGGNDRDTKDKIRAAQKSEG. Positions 609–626 are enriched in basic and acidic residues; that stretch reads GNDRDTKDKIRAAQKSEG.

It belongs to the TRAFAC class translation factor GTPase superfamily. Classic translation factor GTPase family. LepA subfamily.

It localises to the cell membrane. It carries out the reaction GTP + H2O = GDP + phosphate + H(+). Its function is as follows. Required for accurate and efficient protein synthesis under certain stress conditions. May act as a fidelity factor of the translation reaction, by catalyzing a one-codon backward translocation of tRNAs on improperly translocated ribosomes. Back-translocation proceeds from a post-translocation (POST) complex to a pre-translocation (PRE) complex, thus giving elongation factor G a second chance to translocate the tRNAs correctly. Binds to ribosomes in a GTP-dependent manner. This Bifidobacterium animalis subsp. lactis (strain AD011) protein is Elongation factor 4.